The primary structure comprises 368 residues: Proton-coupled zinc antiporter SLC30A8 (368 aa).

Residues 1–78 lie on the Cytoplasmic side of the membrane; it reads MEFLERTYLV…AKWRLCAASA (78 aa). Positions 51, 52, and 53 each coordinate Zn(2+). The HCH Motif; seals regulatory zinc-binding pocket motif lies at 51 to 53; that stretch reads HCH. The helical transmembrane segment at 79 to 99 threads the bilayer; that stretch reads ICFFFMVAEVVGGHVAGSLAV. Topologically, residues 100-102 are lumenal, vesicle; it reads LTD. A helical membrane pass occupies residues 103–123; the sequence is AAHLLIDLTSFLLSLFSLWLS. Zn(2+) contacts are provided by His-105 and Asp-109. Over 124 to 139 the chain is Cytoplasmic; it reads SRPPSKRLTFGWYRAE. A helical membrane pass occupies residues 140 to 160; that stretch reads ILGALLSVLCIWVVTGVLVYL. The Lumenal, vesicle portion of the chain corresponds to 161–174; sequence ACERLLYPDYQIQA. Residues 175–195 form a helical membrane-spanning segment; it reads GIMITVSGCAVAANIVLTLIL. The Cytoplasmic portion of the chain corresponds to 196–216; it reads HQRHLGHNHKDAQANASVRAA. A helical membrane pass occupies residues 217 to 237; the sequence is FVHALGDVFQSTSVLISALII. The Zn(2+) site is built by His-219 and Asp-223. The Lumenal, vesicle portion of the chain corresponds to 238-245; sequence YFKPDYKM. The helical transmembrane segment at 246–266 threads the bilayer; that stretch reads ADPVCTFISSVLALASTVMIL. Topologically, residues 267 to 368 are cytoplasmic; that stretch reads KDFSILLMEG…SCLLCEDPQD (102 aa). Zn(2+) contacts are provided by His-300, His-317, His-344, Glu-351, Cys-360, and Cys-363.

This sequence belongs to the cation diffusion facilitator (CDF) transporter (TC 2.A.4) family. SLC30A subfamily. As to quaternary structure, homodimer. In terms of tissue distribution, expressed in endocrine pancreatic islet alpha and beta cells. May be more abundant in beta cells than in alpha cells. Expressed in cubical epithelium lining thyroid follicles (at protein level). In the adrenal gland, detected in the cortex, but not in the medulla (at protein level).

The protein resides in the cytoplasmic vesicle. It localises to the secretory vesicle membrane. The protein localises to the cell membrane. The catalysed reaction is Zn(2+)(in) + 2 H(+)(out) = Zn(2+)(out) + 2 H(+)(in). Its function is as follows. Proton-coupled zinc ion antiporter mediating the entry of zinc into the lumen of pancreatic beta cell secretory granules, thereby regulating insulin secretion. The protein is Proton-coupled zinc antiporter SLC30A8 of Rattus norvegicus (Rat).